A 394-amino-acid chain; its full sequence is UDP-glucose 6-dehydrogenase (394 aa).

Residues 2–19, Val-11, Asp-29, Lys-34, Thr-83, Thr-118, and Glu-145 each bind NAD(+); that span reads KIAI…AVLL. Residues 141–145, Lys-203, Asn-207, 248–252, and Gly-256 each bind substrate; these read EFLRE and YNNPS. NAD(+) is bound at residue Tyr-258. Residue Cys-259 is the Nucleophile of the active site. Lys-262 provides a ligand contact to NAD(+). Lys-313 serves as a coordination point for substrate. An NAD(+)-binding site is contributed by Arg-320.

Belongs to the UDP-glucose/GDP-mannose dehydrogenase family.

The catalysed reaction is UDP-alpha-D-glucose + 2 NAD(+) + H2O = UDP-alpha-D-glucuronate + 2 NADH + 3 H(+). It functions in the pathway nucleotide-sugar biosynthesis; UDP-alpha-D-glucuronate biosynthesis; UDP-alpha-D-glucuronate from UDP-alpha-D-glucose: step 1/1. Its function is as follows. Catalyzes the formation of UDP-glucuronic acid which is required for capsular hyaluronic acid synthesis. Directly responsible for the transformation of some unencapsulated serotype-3 SP mutants to the encapsulated phenotype. This chain is UDP-glucose 6-dehydrogenase (cap3A), found in Streptococcus pneumoniae.